The sequence spans 289 residues: uncharacterized protein (289 aa).

10 consecutive transmembrane segments (helical) span residues 7-27 (LLLA…KIGL), 33-53 (FNLA…WVFW), 65-85 (WLHL…FQFL), 92-112 (ATNA…WGLV), 123-143 (GVFL…LEFF), 148-168 (IFGD…TVLG), 182-202 (AYAF…SGFA), 212-232 (VAAL…VWYY), 241-261 (SVAV…FYAL), and 265-285 (PDFF…LTTA). 2 EamA domains span residues 14–136 (LIWA…LIVS) and 159–285 (FLWA…LTTA).

The protein belongs to the EamA transporter family.

It is found in the cell membrane. This is an uncharacterized protein from Archaeoglobus fulgidus (strain ATCC 49558 / DSM 4304 / JCM 9628 / NBRC 100126 / VC-16).